Reading from the N-terminus, the 232-residue chain is 5'-methylthioadenosine/S-adenosylhomocysteine nucleosidase (232 aa).

The Proton acceptor role is filled by Glu-12. Residues Gly-78, Ile-152, and 173 to 174 each bind substrate; that span reads ME. The Proton donor role is filled by Asp-197.

The protein belongs to the PNP/UDP phosphorylase family. MtnN subfamily. In terms of assembly, homodimer.

The catalysed reaction is S-adenosyl-L-homocysteine + H2O = S-(5-deoxy-D-ribos-5-yl)-L-homocysteine + adenine. The enzyme catalyses S-methyl-5'-thioadenosine + H2O = 5-(methylsulfanyl)-D-ribose + adenine. It carries out the reaction 5'-deoxyadenosine + H2O = 5-deoxy-D-ribose + adenine. Its pathway is amino-acid biosynthesis; L-methionine biosynthesis via salvage pathway; S-methyl-5-thio-alpha-D-ribose 1-phosphate from S-methyl-5'-thioadenosine (hydrolase route): step 1/2. Functionally, catalyzes the irreversible cleavage of the glycosidic bond in both 5'-methylthioadenosine (MTA) and S-adenosylhomocysteine (SAH/AdoHcy) to adenine and the corresponding thioribose, 5'-methylthioribose and S-ribosylhomocysteine, respectively. Also cleaves 5'-deoxyadenosine, a toxic by-product of radical S-adenosylmethionine (SAM) enzymes, into 5-deoxyribose and adenine. Thus, is required for in vivo function of the radical SAM enzymes biotin synthase and lipoic acid synthase, that are inhibited by 5'-deoxyadenosine accumulation. The protein is 5'-methylthioadenosine/S-adenosylhomocysteine nucleosidase of Escherichia coli O7:K1 (strain IAI39 / ExPEC).